We begin with the raw amino-acid sequence, 85 residues long: MNYLIVISFALLLMTGVQSGRDAYIADSENCTYTCALNPYCNDLCTKNGAKSGYCQWAGRYGNACWCIDLPDKVPIRISGSCRGR.

Residues 1–19 form the signal peptide; it reads MNYLIVISFALLLMTGVQS. An LCN-type CS-alpha/beta domain is found at 21–83; it reads RDAYIADSEN…VPIRISGSCR (63 aa). 4 disulfide bridges follow: C31–C82, C35–C55, C41–C65, and C45–C67.

The protein belongs to the long (4 C-C) scorpion toxin superfamily. Sodium channel inhibitor family. Alpha subfamily. Expressed by the venom gland.

The protein resides in the secreted. In terms of biological role, alpha toxins bind voltage-independently at site-3 of sodium channels (Nav) and inhibit the inactivation of the activated channels, thereby blocking neuronal transmission. This toxin expressed with the pET-14b vector has low inhibitory activity on sodium channels (11.33% on rNav1.2/SCN2A, 15.96% on mNav1.4/SCN4A and 5.04% on hNav1.5/SCN5A). When expressed with the pET-28a vector, this toxin has higher inhibitory activities (44.12% on rNav1.2/SCN2A, 25.40% on mNav1.4/SCN4A and 65.34% on hNav1.5/SCN5A). This chain is Alpha-toxin BmalphaTx47, found in Olivierus martensii (Manchurian scorpion).